We begin with the raw amino-acid sequence, 491 residues long: Putative ABC transporter ATP-binding protein TDE_0906 (491 aa).

ABC transporter domains lie at 2–241 (INLN…KQGL) and 267–491 (LTLH…KERL). Residues 36–43 (GKSGCGKT) and 300–307 (GKNGCGKT) contribute to the ATP site.

This sequence belongs to the ABC transporter superfamily.

The protein localises to the cell inner membrane. In terms of biological role, probably part of an ABC transporter complex. Responsible for energy coupling to the transport system. This Treponema denticola (strain ATCC 35405 / DSM 14222 / CIP 103919 / JCM 8153 / KCTC 15104) protein is Putative ABC transporter ATP-binding protein TDE_0906.